The sequence spans 238 residues: Riboflavin-binding protein (238 aa).

A signal peptide spans 1–17; sequence MLRFAVTLFAVITSSTC. Disulfide bonds link Cys-22-Cys-49, Cys-41-Cys-90, Cys-50-Cys-94, Cys-74-Cys-155, Cys-81-Cys-127, Cys-116-Cys-186, Cys-120-Cys-169, Cys-133-Cys-151, and Cys-184-Cys-219. N-linked (GlcNAc...) asparagine glycosylation is found at Asn-53, Asn-67, and Asn-105. Asn-164 is a glycosylation site (N-linked (GlcNAc...) asparagine). Phosphoserine is present on residues Ser-204, Ser-205, Ser-208, Ser-209, Ser-210, Ser-212, Ser-213, and Ser-214.

Belongs to the folate receptor family. Post-translationally, N-glycosylated. Expressed in egg yolk and egg white (at protein level).

Its function is as follows. Required for the transport of riboflavin to the developing oocyte. This chain is Riboflavin-binding protein, found in Dromaius novaehollandiae (Emu).